Reading from the N-terminus, the 648-residue chain is Macrolide export ATP-binding/permease protein MacB (648 aa).

The ABC transporter domain maps to 5 to 243 (LELCNVSRSY…QGVDAAVVNT (239 aa)). 41–48 (GVSGSGKS) lines the ATP pocket. The next 5 helical transmembrane spans lie at 273–293 (LLTMLGIIIGIASVVSIVVVG), 417–437 (ANVVGEVVLAGNMPVIVIGVA), 523–543 (LFLTLVAVISLVVGGIGVMNI), 577–597 (VLVCLVGGALGISLSMFIAFM), and 611–631 (LTALASAFLCSTFTGILFGWL).

This sequence belongs to the ABC transporter superfamily. Macrolide exporter (TC 3.A.1.122) family. In terms of assembly, homodimer. Part of the tripartite efflux system MacAB-TolC, which is composed of an inner membrane transporter, MacB, a periplasmic membrane fusion protein, MacA, and an outer membrane component, TolC. The complex forms a large protein conduit and can translocate molecules across both the inner and outer membranes. Interacts with MacA.

It is found in the cell inner membrane. Part of the tripartite efflux system MacAB-TolC. MacB is a non-canonical ABC transporter that contains transmembrane domains (TMD), which form a pore in the inner membrane, and an ATP-binding domain (NBD), which is responsible for energy generation. Confers resistance against macrolides. This Salmonella choleraesuis (strain SC-B67) protein is Macrolide export ATP-binding/permease protein MacB.